The primary structure comprises 603 residues: Zyxin (603 aa).

Over residues 1-13 (MGPPPPPPPPPLL) the composition is skewed to pro residues. 5 disordered regions span residues 1 to 131 (MGPP…HRDP), 166 to 193 (TQYA…PYSS), 218 to 237 (ATTT…NKYG), 310 to 333 (RDEG…SASS), and 363 to 395 (LNQP…TTST). A compositionally biased stretch (basic and acidic residues) spans 69–95 (VRGDVENLSDGRLDRPHQQLPDGDRTY). Polar residues predominate over residues 184 to 193 (EATYVSPYSS). The span at 218 to 234 (ATTTTSSNSLNENNNSN) shows a compositional bias: low complexity. Polar residues-rich tracts occupy residues 315–333 (TESQ…SASS), 363–373 (LNQPADTSPSI), and 382–391 (PDSSRANYSA). 3 LIM zinc-binding domains span residues 409 to 470 (NICV…SLEK), 471 to 529 (CTAC…KFAP), and 530 to 601 (RCAL…RVVS).

This sequence belongs to the zyxin/ajuba family. As to quaternary structure, interacts with dyc-1. Interacts with glh-1 and glh-3. In terms of tissue distribution, expressed in neurons and body wall muscle. Expressed in pharyngeal, enteric and uterine muscles and in spermatheca.

It localises to the nucleus. Its subcellular location is the cytoplasm. It is found in the myofibril. The protein localises to the sarcomere. The protein resides in the m line. It localises to the cell projection. Its subcellular location is the axon. It is found in the cell junction. The protein localises to the focal adhesion. The protein resides in the cytoskeleton. In terms of biological role, functions both as a mechanical stabilizer (via LIM domains) of focal adhesions, and as a sensor component for muscle cell damage (via N-terminus). Regulates, stabilizes and maintains posterior lateral mechanosensory (PLM) synaptic branch extension and new synapse formation and growth during larval development. The protein is Zyxin of Caenorhabditis elegans.